A 201-amino-acid polypeptide reads, in one-letter code: Twin horsetail protein 2 (201 aa).

Its subcellular location is the nucleus. Required for correct meiotic chromosome segregation and recombination. This chain is Twin horsetail protein 2 (tht2), found in Schizosaccharomyces pombe (strain 972 / ATCC 24843) (Fission yeast).